Reading from the N-terminus, the 406-residue chain is Argininosuccinate synthase (406 aa).

ATP is bound by residues 11–19 and Ala-38; that span reads AYSGGLDTS. L-citrulline is bound by residues Tyr-91 and Ser-96. Gly-121 contacts ATP. 3 residues coordinate L-aspartate: Thr-123, Asn-127, and Asp-128. Asn-127 lines the L-citrulline pocket. L-citrulline-binding residues include Arg-131, Ser-181, Ser-190, Glu-266, and Tyr-278.

The protein belongs to the argininosuccinate synthase family. Type 1 subfamily. As to quaternary structure, homotetramer.

The protein localises to the cytoplasm. It carries out the reaction L-citrulline + L-aspartate + ATP = 2-(N(omega)-L-arginino)succinate + AMP + diphosphate + H(+). Its pathway is amino-acid biosynthesis; L-arginine biosynthesis; L-arginine from L-ornithine and carbamoyl phosphate: step 2/3. The protein is Argininosuccinate synthase of Campylobacter jejuni subsp. doylei (strain ATCC BAA-1458 / RM4099 / 269.97).